A 244-amino-acid polypeptide reads, in one-letter code: Probable hydrolase R7 (244 aa).

An N-terminal signal peptide occupies residues 1-20; the sequence is MTKPFILLVPGSFAPETIYA. Active-site charge relay system residues include aspartate 192 and histidine 224. Residue asparagine 227 is glycosylated (N-linked (GlcNAc...) asparagine).

It belongs to the AB hydrolase superfamily.

The protein operates within secondary metabolite biosynthesis. Functionally, probable hydrolase; part of the gene cluster that mediates the biosynthesis of squalestatin S1 (SQS1, also known as zaragozic acid A), a lead compound for the treatment of hyper-cholesterolemia by targeting squalene synthase (SS). Both phenylalanine and benzoic acid are known precursors of SQS1 and so it is unsurprising that the cluster also contains genes potentially involved in benzoate production such as phenyl-alanine ammonia lysase (PAL) M7, which catalyzes the first step in the degradation of phenylalanine, or the NADP-dependent dehydrogenase M3. The cluster contains two PKS encoding genes. The tetraketide synthase is responsible for the biosynthesis of the tetraketide sidechain of SQS1. The biosynthesis must involve 3 rounds of chain extension. After the first and second rounds methyl-transfer occurs, and in all rounds of extension the ketoreductase and dehydratase areactive. The enoyl reductase and C-MeT are not active in the final round of extension. The other PKS is therefore likely to encode squalestatin hexaketide synthase (SQHKS). The hexaketide main chain is initiated by benzoate which is an unusual starter unit for a highly reducing polyketide synthase. The cluster also contains a gene encoding a citrate synthase-like protein R3 presumably involved in linking the hexaketide to the oxaloacetate moiety. Formation of the tetraketide CoA may be catalyzed by the M9 CoA ligase, but the mechanism of release of the tetraketide and the hexaketide from their respective PKS remains unknown, although the cluster encodes a potential esterase (M8) and a possible hydrolase (M10) which could be involved in these processes. Two acyltransferases (AT), M4 and R4, are also encoded in the cluster. M4 is responsible for loading of the tetraketide sidechain from CoA onto the squalestatin core as the final step of biosynthesis. M4 appears to have a broad substrate selectivity for its acyl CoA substrate, allowing the in vitro synthesis of novel squalestatins. The biosynthesis of SQS1 requires several oxidative steps likely performed by oxidoreductases M1, R1 and R2. Finally, in support of the identification of the cluster as being responsible for SQS1 production, the cluster contains a gene encoding a putative squalene synthase (SS) R6, suggesting a likely mechanism for self-resistance. The protein is Probable hydrolase R7 of Phoma sp. (strain ATCC 20986 / MF5453).